The sequence spans 82 residues: Small ribosomal subunit protein bS16 (82 aa).

It belongs to the bacterial ribosomal protein bS16 family.

This Pectobacterium carotovorum subsp. carotovorum (strain PC1) protein is Small ribosomal subunit protein bS16.